A 284-amino-acid polypeptide reads, in one-letter code: 2-dehydro-3-deoxyphosphooctonate aldolase (284 aa).

This sequence belongs to the KdsA family.

It localises to the cytoplasm. It carries out the reaction D-arabinose 5-phosphate + phosphoenolpyruvate + H2O = 3-deoxy-alpha-D-manno-2-octulosonate-8-phosphate + phosphate. It functions in the pathway carbohydrate biosynthesis; 3-deoxy-D-manno-octulosonate biosynthesis; 3-deoxy-D-manno-octulosonate from D-ribulose 5-phosphate: step 2/3. Its pathway is bacterial outer membrane biogenesis; lipopolysaccharide biosynthesis. This Aliivibrio salmonicida (strain LFI1238) (Vibrio salmonicida (strain LFI1238)) protein is 2-dehydro-3-deoxyphosphooctonate aldolase.